The following is a 338-amino-acid chain: Formamidase (338 aa).

The 243-residue stretch at 15–257 folds into the CN hydrolase domain; that stretch reads VVIGLAQLAL…DEIVCCELRP (243 aa). Glutamate 61 acts as the Proton acceptor in catalysis. Lysine 130 (proton donor) is an active-site residue. Cysteine 163 acts as the Nucleophile in catalysis.

Belongs to the carbon-nitrogen hydrolase superfamily. Aliphatic amidase family.

The enzyme catalyses formamide + H2O = formate + NH4(+). Is an aliphatic amidase with a restricted substrate specificity, as it only hydrolyzes formamide. This Pseudomonas syringae pv. tomato (strain ATCC BAA-871 / DC3000) protein is Formamidase.